Reading from the N-terminus, the 306-residue chain is MSSRSKERVVTAFRKIFHKSSNNNNNNNNNHNNNINNNNNNDKVDGATGSSPNINNNNNNNNNNNNHDGAAAPSSAGGVAVAGGAVGSSGSSGAAKNAVVRMAAEQAVWDSPGKRRRQDHKVAPTTERQLVAAPDHTIRTRRLMKEYREMERLQAKNDAVFTVELVNDSLFEWHVRLHVIDPDSPLARDMAEMGVPAILLHLSFPDNFPFAPPFMRVVEPHIEKGYVMEGGAICMELLTPRGWASAYTVEAVIMQFAASVVKGQGRIARKPKSTKEFTRRQAEESFRSLVKTHEKYGWVTPALSDG.

The tract at residues 18–77 (HKSSNNNNNNNNNHNNNINNNNNNDKVDGATGSSPNINNNNNNNNNNNNHDGAAAPSSAG) is disordered. 2 stretches are compositionally biased toward low complexity: residues 22–41 (NNNN…NNNN) and 53–77 (NINN…SSAG). Residues 138–299 (IRTRRLMKEY…VKTHEKYGWV (162 aa)) enclose the UBC core domain. Cys-234 (glycyl thioester intermediate) is an active-site residue.

It belongs to the ubiquitin-conjugating enzyme family.

The enzyme catalyses S-ubiquitinyl-[E1 ubiquitin-activating enzyme]-L-cysteine + [E2 ubiquitin-conjugating enzyme]-L-cysteine = [E1 ubiquitin-activating enzyme]-L-cysteine + S-ubiquitinyl-[E2 ubiquitin-conjugating enzyme]-L-cysteine.. The protein operates within protein modification; protein ubiquitination. Its function is as follows. Catalyzes the covalent attachment of ubiquitin to other proteins. This is Ubiquitin-conjugating enzyme E2Q-like protein CG4502 from Drosophila melanogaster (Fruit fly).